The following is a 582-amino-acid chain: Hemagglutinin-neuraminidase (582 aa).

Residues 1–34 (MEPSKLFTMSDNATFAPGPVINAADKKTFRTCFR) lie on the Intravirion side of the membrane. Residues 35–55 (ILVLSVQAVTLILVIVTLGEL) form a helical; Signal-anchor for type II membrane protein membrane-spanning segment. The Virion surface segment spans residues 56-582 (VRMINDQGLS…LPVLTRLTIT (527 aa)). A glycan (N-linked (GlcNAc...) asparagine; by host) is linked at asparagine 127. Disulfide bonds link cysteine 178–cysteine 202, cysteine 192–cysteine 253, and cysteine 244–cysteine 257. The involved in neuraminidase activity stretch occupies residues 240-245 (NRKSCS). 2 N-linked (GlcNAc...) asparagine; by host glycosylation sites follow: asparagine 284 and asparagine 329. Disulfide bonds link cysteine 350–cysteine 471, cysteine 382–cysteine 392, and cysteine 465–cysteine 475. N-linked (GlcNAc...) asparagine; by host glycans are attached at residues asparagine 400, asparagine 448, and asparagine 464. An N-linked (GlcNAc...) asparagine; by host glycan is attached at asparagine 507. Cysteine 545 and cysteine 556 are joined by a disulfide.

This sequence belongs to the paramyxoviruses hemagglutinin-neuraminidase family. Homotetramer; composed of disulfide-linked homodimers. Interacts with F protein trimer.

It localises to the virion membrane. It is found in the host cell membrane. The catalysed reaction is Hydrolysis of alpha-(2-&gt;3)-, alpha-(2-&gt;6)-, alpha-(2-&gt;8)- glycosidic linkages of terminal sialic acid residues in oligosaccharides, glycoproteins, glycolipids, colominic acid and synthetic substrates.. Attaches the virus to alpha-2,3-linked sialic acid-containing cell receptors and thereby initiating infection. Binding of HN protein to the receptor induces a conformational change that allows the F protein to trigger virion/cell membranes fusion. Binds to the glycan motifs sialyl Lewis (SLe) and GM2 ganglioside (GM2-glycan). Functionally, neuraminidase (sialidase) activity ensures the efficient spread of the virus by dissociating the mature virions from the neuraminic acid containing glycoproteins. This is Hemagglutinin-neuraminidase (HN) from Mumps virus genotype B (strain Miyahara vaccine) (MuV).